Consider the following 469-residue polypeptide: Programmed cell death protein 4 (469 aa).

N-acetylmethionine is present on M1. Positions 1-23 (MDIENEQTLNVNPTDPDNLSDSL) are enriched in polar residues. Disordered stretches follow at residues 1–37 (MDIE…EEIK) and 58–128 (KAKR…GTPG). S25 carries the post-translational modification Phosphoserine. The Nuclear localization signal motif lies at 58 to 64 (KAKRRLR). S67 bears the Phosphoserine; by PKB and RPS6KB1 mark. Residues S68, S71, S76, S78, and S94 each carry the phosphoserine modification. A Phosphodegron motif is present at residues 70-76 (DSGRGDS). A compositionally biased stretch (gly residues) spans 114 to 125 (KKGGAGGKGVWG). A Phosphotyrosine modification is found at Y152. Residues 163–284 (AFEKTLTPII…CNTYIDSYKG (122 aa)) form the MI 1 domain. A phosphoserine mark is found at S313 and S317. The MI 2 domain occupies 326 to 449 (HLVKEIDMLL…SKQLRDLCPS (124 aa)). The Nuclear localization signal motif lies at 448–454 (PSRGRKR). Position 457 is a phosphoserine; by PKB (S457).

This sequence belongs to the PDCD4 family. As to quaternary structure, interacts (via MI domains) with EIF4A1 and EIF4A2 (via N-terminal domain). Heterotrimer with EIF4A1; one molecule of PDCD4 binds two molecules of EIF4A1. Interacts with EIF4G1. May form a complex with EIF4A1 and EIF4G1. The interaction between PDCD4 and EIF4A1 interferes with the interaction between EIF4A1 and EIF4G. When phosphorylated, interacts with BTRC and FBXW11. Post-translationally, polyubiquitinated, leading to its proteasomal degradation. Rapidly degraded in response to mitogens. Phosphorylation of the phosphodegron promotes interaction with BTRC and proteasomal degradation. In terms of processing, phosphorylated at Ser-67 by RPS6KB1 in response to mitogens; phosphorylation promotes proteasomal degradation of PDCD4. Expressed ubiquitously. Highyly expressed in thymus and liver. Moderately expressed in brain, kidney and spleen; weakly in lung and heart. Expression is up- or down-regulated in response to apoptosis inducers. Regulated by many programmed cell death-inducing stimuli.

It is found in the nucleus. It localises to the cytoplasm. Its function is as follows. Inhibits translation initiation and cap-dependent translation. May excert its function by hindering the interaction between EIF4A1 and EIF4G. Inhibits the helicase activity of EIF4A. Modulates the activation of JUN kinase. Down-regulates the expression of MAP4K1, thus inhibiting events important in driving invasion, namely, MAPK85 activation and consequent JUN-dependent transcription. May play a role in apoptosis. Tumor suppressor. Inhibits tumor promoter-induced neoplastic transformation. Binds RNA. This chain is Programmed cell death protein 4 (Pdcd4), found in Mus musculus (Mouse).